The chain runs to 28 residues: Dermaseptin-2 (28 aa).

A Glutamine amide modification is found at Q28.

The protein belongs to the frog skin active peptide (FSAP) family. Dermaseptin subfamily. In terms of tissue distribution, expressed by the skin glands.

The protein localises to the secreted. In terms of biological role, antimicrobial peptide with activity against the Gram-positive bacterium S.aureus, and the Gram-negative bacteria E.coli and P.aeruginosa. Probably acts by disturbing membrane functions with its amphipathic structure. Has an activity of stimulation of insulin release, which may protect the species from being eaten by predators by causing fatal hypoglycemia. Has hemolytic activity (60% hemolysis at 128 ug/ml). In Phyllomedusa tarsius (Brownbelly leaf frog), this protein is Dermaseptin-2.